A 244-amino-acid chain; its full sequence is Phosphoadenosine 5'-phosphosulfate reductase (244 aa).

Cys239 (nucleophile; cysteine thiosulfonate intermediate) is an active-site residue.

It belongs to the PAPS reductase family. CysH subfamily.

It localises to the cytoplasm. The catalysed reaction is [thioredoxin]-disulfide + sulfite + adenosine 3',5'-bisphosphate + 2 H(+) = [thioredoxin]-dithiol + 3'-phosphoadenylyl sulfate. Its pathway is sulfur metabolism; hydrogen sulfide biosynthesis; sulfite from sulfate: step 3/3. In terms of biological role, catalyzes the formation of sulfite from phosphoadenosine 5'-phosphosulfate (PAPS) using thioredoxin as an electron donor. In Escherichia coli O157:H7, this protein is Phosphoadenosine 5'-phosphosulfate reductase.